We begin with the raw amino-acid sequence, 120 residues long: NAD(P)H-quinone oxidoreductase subunit 3, chloroplastic (120 aa).

Transmembrane regions (helical) follow at residues 9–29 (FFWAFLIISILVPILAFLISG), 64–84 (MFALVFVVFDVETVFLYPWAM), and 88–108 (VLGVSVFIEAFIFVLILIIGL).

This sequence belongs to the complex I subunit 3 family. As to quaternary structure, NDH is composed of at least 16 different subunits, 5 of which are encoded in the nucleus.

It is found in the plastid. Its subcellular location is the chloroplast thylakoid membrane. It carries out the reaction a plastoquinone + NADH + (n+1) H(+)(in) = a plastoquinol + NAD(+) + n H(+)(out). The catalysed reaction is a plastoquinone + NADPH + (n+1) H(+)(in) = a plastoquinol + NADP(+) + n H(+)(out). In terms of biological role, NDH shuttles electrons from NAD(P)H:plastoquinone, via FMN and iron-sulfur (Fe-S) centers, to quinones in the photosynthetic chain and possibly in a chloroplast respiratory chain. The immediate electron acceptor for the enzyme in this species is believed to be plastoquinone. Couples the redox reaction to proton translocation, and thus conserves the redox energy in a proton gradient. The sequence is that of NAD(P)H-quinone oxidoreductase subunit 3, chloroplastic from Nicotiana tabacum (Common tobacco).